A 1019-amino-acid polypeptide reads, in one-letter code: MASLDENADELHRMDSSDEASINDDQEDILDTPRTRVRKMLASVDMQLSSNAVSEASLDKESTVGNLENQKNRSYSSEIYLHSDTNFLSNFDSAYERVRRLLNQQGGKSSLQKKEVEQIETQEGGDNAKGSPSSENKDSDRNSRLQQLIEKKRNALKKEQEDLIQNSATSHSKSDNLDSESADDSDLADESELSKKYTSDRKIRNASKKALLELHRNTARLTRETALKPEVVVKKKVTLREFFQKIGFKNDNQLENKAISEEEANSTEPPNVEKEEPKPSVDRSTGIVNSEDIKELSVEDDSLELKEITPEALDIGQTSLFTTLNQTQVKKEDNKKFLLKEINAKLNEDDIDSELEIEVKPKTTALDNIEKSKLSEENEHGIKGKLKQLAEIKLSKDGKPFENEFNIKSFNRNLVKRAAVMAKLQRNQLEEELKAKGIYKPTIQGEKEEEEDPLERARNDAEKIRQLEKASGNASDEGELNDEEEVISSSNTPSTKAKTTNKVIISDVIIEATQAEPKRRQKNSRVVFDEEDLTGDSHGSSNMKISESDDESNGDMIRDSFDRLSSESIKDSQKTEELHDSFGINDEVDQSTSLYVQNSQPSASQLTIVDATYSQPPPRWESSSRDDKTNTSSTQPSQVDSLVPTQLDSTIPTQIDSVQRNKDQDDEEILEERRESRRDSKTFLSRTMLYNKDTGKADSAWASDLIEEQAIESDDEYAGIGGLSDDGLSDSDAELEVQNMIDDETTIQKGEVASMAQFAKDQEMDRDEKLVKQLMKDVTTGALRKRNRNGFAALDDSDDEDYSNLRREKLKELRRQKLLEDGNLNVLEGDKRKAFLATVEDSLVSSKDNLTWLDATVEDSGVGSSDLGDEYLYSEQSLNHEEEEQMEEELSEIFSSGGPNVVDRVYLKKSSTRHTSDNNSLEEVLPIFPGVRKLVSNSQSEKIGDLSNDNSMGAKSYKTPIISSTQRPQGRKFRGLMNQSSKADISRTVDAGSIKVVPNSQSANPPRLLASLNNYSDFD.

Disordered stretches follow at residues 1–33 (MASL…LDTP), 105–143 (QGGK…DRNS), 166–202 (NSAT…SDRK), 261–290 (EEEA…IVNS), 443–683 (IQGE…SKTF), and 965–1019 (TQRP…SDFD). Over residues 17 to 30 (SDEASINDDQEDIL) the composition is skewed to acidic residues. Residues 177 to 191 (LDSESADDSDLADES) show a composition bias toward acidic residues. Composition is skewed to basic and acidic residues over residues 192–202 (ELSKKYTSDRK), 271–281 (NVEKEEPKPSV), and 454–468 (LERA…RQLE). Acidic residues predominate over residues 476–486 (DEGELNDEEEV). Residues 487 to 503 (ISSSNTPSTKAKTTNKV) show a composition bias toward polar residues. Residues 556-580 (MIRDSFDRLSSESIKDSQKTEELHD) are compositionally biased toward basic and acidic residues. 2 stretches are compositionally biased toward polar residues: residues 590–607 (QSTS…SQLT) and 630–658 (NTSS…IDSV). Serine 604 is modified (phosphoserine). Position 645 is a phosphothreonine (threonine 645). Residues 671 to 681 (EERRESRRDSK) show a composition bias toward basic and acidic residues.

As to quaternary structure, interacts with cds1. Post-translationally, phosphorylated by rad3 and tel1.

Its subcellular location is the nucleus. Component of the replisome and is required for rad3-dependent activation of the checkpoint kinase cds1 in response to replication fork arrest. Phosphorylation allows it to mediate the activation of cds1. This Schizosaccharomyces pombe (strain 972 / ATCC 24843) (Fission yeast) protein is Mediator of replication checkpoint protein 1 (mrc1).